The following is a 60-amino-acid chain: Large ribosomal subunit protein uL30 (60 aa).

It belongs to the universal ribosomal protein uL30 family. In terms of assembly, part of the 50S ribosomal subunit.

This Dehalococcoides mccartyi (strain ATCC BAA-2266 / KCTC 15142 / 195) (Dehalococcoides ethenogenes (strain 195)) protein is Large ribosomal subunit protein uL30.